The following is a 511-amino-acid chain: mRNA export factor (511 aa).

Low complexity predominate over residues 1–15 (MATDIDMLIDLGLDL). Residues 1 to 244 (MATDIDMLID…ERKAPAADTI (244 aa)) are disordered. The Nuclear export signal motif lies at 5–17 (IDMLIDLGLDLSD). Phosphoserine; by host is present on residues serine 16 and serine 18. Composition is skewed to acidic residues over residues 16–26 (SDSDLDEDPPE) and 35–51 (LESDSSGECSSSDEDME). The interval 104 to 112 (VWSRLGARR) is interaction with host ALYREF. Positions 110–138 (ARRPSCSPEQHGGKVARLQPPPTKAQPAR) match the Nuclear localization signal motif. Serine 114 carries the phosphoserine; by host modification. Residue arginine 138 is modified to Dimethylated arginine; by host. The segment at 138–152 (RGGRRGRRRGRGRGG) is RGG-box. The segment covering 139 to 149 (GGRRGRRRGRG) has biased composition (basic residues). The residue at position 148 (arginine 148) is an Omega-N-methylarginine; by host. A Dimethylated arginine; by host modification is found at arginine 150. Residues 213–232 (APPPLMTLAIAPPPADPRAP) are compositionally biased toward pro residues. 4 residues coordinate Zn(2+): cysteine 399, histidine 478, cysteine 482, and cysteine 487. A CHC2-type zinc finger spans residues 399–487 (CYLKARGLCG…HRQECSSRVC (89 aa)).

This sequence belongs to the HHV-1 ICP27 protein family. As to quaternary structure, interacts with host RBP1; this interaction facilitates the RNA polymerase recruitment to viral transcription sites. Interacts (via the RGG box) with host ALYREF/THOC4; this interaction recruits ALYREF to viral replication compartments and probably directs viral mRNA to the TAP/NFX1 pathway. Interacts (via the RGG box) with host SRPK1; this interaction relocalizes SRPK1 to the nucleus and seems to alter its activity. Interacts with ICP4; this interaction modulates ICP4 DNA-binding activity. Interacts with host NXF1; this interaction allows efficient export of HSV-1 early and late transcripts. In terms of processing, methylated within the RGG box possibly by host PRMT1. When hypomethylated, ICP27 is exported to the cytoplasm earlier and more rapidly. Phosphorylated.

It is found in the host cytoplasm. The protein localises to the host nucleus. Functionally, multifunctional regulator of the expression of viral genes that contributes to the shutoff of host protein synthesis and mediates nuclear export of viral intronless mRNAs. Early in infection, this immediate early (EI) protein mediates the inhibition of cellular splicing. This results in the accumulation of unprocessed 3'end pre-mRNAs which can't be exported from the nucleus. Cellular protein synthesis is thereby shut off early after virus infection. Later in the infection, it helps recruit cellular RNA polymerase II to viral replication sites and promotes the nuclear export of viral intronless mRNAs by interacting with mRNAs and host NXF1/TAP. ICP27 binds to NUP62 which may provide facilitated viral mRNA export and may compete with some host cell transport receptors for binding and inhibit cellular nucleocytoplasmic transport pathways. Also stimulates translation of viral transcripts. Repression of host gene expression blocks the cell cycle at the G1 phase and prevents apoptosis. Seems to silence the 3' splice site of the promyelocytic leukemia (PML) intron 7a, thereby switching PML isoforms from PML-II to PML-V. This could be linked to the accelerated mRNA export induced by ICP27 which might not provide sufficient time for PML pre-mRNA to be spliced in the nucleus. This Human herpesvirus 1 (strain HFEM) (HHV-1) protein is mRNA export factor.